We begin with the raw amino-acid sequence, 302 residues long: uncharacterized protein (302 aa).

Belongs to the HAD-like hydrolase superfamily.

This is an uncharacterized protein from Saccharomyces cerevisiae (strain ATCC 204508 / S288c) (Baker's yeast).